A 248-amino-acid chain; its full sequence is Ribosomal RNA small subunit methyltransferase J (248 aa).

S-adenosyl-L-methionine-binding positions include 101–102 (RD), 117–118 (ER), 153–154 (SS), and aspartate 171.

It belongs to the methyltransferase superfamily. RsmJ family.

Its subcellular location is the cytoplasm. It carries out the reaction guanosine(1516) in 16S rRNA + S-adenosyl-L-methionine = N(2)-methylguanosine(1516) in 16S rRNA + S-adenosyl-L-homocysteine + H(+). Functionally, specifically methylates the guanosine in position 1516 of 16S rRNA. The sequence is that of Ribosomal RNA small subunit methyltransferase J from Proteus mirabilis (strain HI4320).